We begin with the raw amino-acid sequence, 69 residues long: uncharacterized protein (69 aa).

It is found in the mitochondrion. This is an uncharacterized protein from Marchantia polymorpha (Common liverwort).